Consider the following 158-residue polypeptide: 2-C-methyl-D-erythritol 2,4-cyclodiphosphate synthase (158 aa).

Residues Asp9 and His11 each contribute to the a divalent metal cation site. Residues 9–11 (DVH) and 35–36 (HS) each bind 4-CDP-2-C-methyl-D-erythritol 2-phosphate. Residue His43 participates in a divalent metal cation binding. 4-CDP-2-C-methyl-D-erythritol 2-phosphate-binding positions include 57–59 (DIG), 62–66 (FPDTD), 133–136 (TTTE), Phe140, and Arg143.

It belongs to the IspF family. As to quaternary structure, homotrimer. It depends on a divalent metal cation as a cofactor.

It carries out the reaction 4-CDP-2-C-methyl-D-erythritol 2-phosphate = 2-C-methyl-D-erythritol 2,4-cyclic diphosphate + CMP. The protein operates within isoprenoid biosynthesis; isopentenyl diphosphate biosynthesis via DXP pathway; isopentenyl diphosphate from 1-deoxy-D-xylulose 5-phosphate: step 4/6. Functionally, involved in the biosynthesis of isopentenyl diphosphate (IPP) and dimethylallyl diphosphate (DMAPP), two major building blocks of isoprenoid compounds. Catalyzes the conversion of 4-diphosphocytidyl-2-C-methyl-D-erythritol 2-phosphate (CDP-ME2P) to 2-C-methyl-D-erythritol 2,4-cyclodiphosphate (ME-CPP) with a corresponding release of cytidine 5-monophosphate (CMP). This chain is 2-C-methyl-D-erythritol 2,4-cyclodiphosphate synthase, found in Haemophilus influenzae (strain 86-028NP).